The sequence spans 335 residues: Glyceraldehyde-3-phosphate dehydrogenase (335 aa).

NAD(+)-binding positions include 12 to 13 (RI), Asp36, Arg80, and Ser122. D-glyceraldehyde 3-phosphate-binding positions include 152–154 (SCT), Thr183, Arg198, 211–212 (TG), and Arg234. Cys153 functions as the Nucleophile in the catalytic mechanism. Asn316 lines the NAD(+) pocket.

It belongs to the glyceraldehyde-3-phosphate dehydrogenase family. In terms of assembly, homotetramer.

The protein localises to the cytoplasm. It catalyses the reaction D-glyceraldehyde 3-phosphate + phosphate + NAD(+) = (2R)-3-phospho-glyceroyl phosphate + NADH + H(+). It functions in the pathway carbohydrate degradation; glycolysis; pyruvate from D-glyceraldehyde 3-phosphate: step 1/5. Catalyzes the oxidative phosphorylation of glyceraldehyde 3-phosphate (G3P) to 1,3-bisphosphoglycerate (BPG) using the cofactor NAD. The first reaction step involves the formation of a hemiacetal intermediate between G3P and a cysteine residue, and this hemiacetal intermediate is then oxidized to a thioester, with concomitant reduction of NAD to NADH. The reduced NADH is then exchanged with the second NAD, and the thioester is attacked by a nucleophilic inorganic phosphate to produce BPG. The polypeptide is Glyceraldehyde-3-phosphate dehydrogenase (gap) (Xanthobacter flavus).